Reading from the N-terminus, the 287-residue chain is mRNA-capping enzyme small subunit (287 aa).

As to quaternary structure, heterodimer of a large and a small subunit.

The protein localises to the virion. It carries out the reaction a 5'-end (5'-triphosphoguanosine)-ribonucleoside in mRNA + S-adenosyl-L-methionine = a 5'-end (N(7)-methyl 5'-triphosphoguanosine)-ribonucleoside in mRNA + S-adenosyl-L-homocysteine. Catalyzes the last reaction in the mRNA cap formation pathway. The protein is mRNA-capping enzyme small subunit of Sus scrofa (Pig).